Reading from the N-terminus, the 490-residue chain is GTPase Der (490 aa).

2 consecutive EngA-type G domains span residues 3–166 (PVVA…MEDL) and 203–376 (IKLA…DSST). GTP contacts are provided by residues 9–16 (GRPNVGKS), 56–60 (DTGGI), 118–121 (NKTD), 209–216 (GRPNVGKS), 256–260 (DTAGV), and 321–324 (NKWD). A KH-like domain is found at 377–461 (RRVGTSMLTR…PIRIQFKEGE (85 aa)).

It belongs to the TRAFAC class TrmE-Era-EngA-EngB-Septin-like GTPase superfamily. EngA (Der) GTPase family. As to quaternary structure, associates with the 50S ribosomal subunit.

Its function is as follows. GTPase that plays an essential role in the late steps of ribosome biogenesis. This is GTPase Der from Shigella flexneri serotype 5b (strain 8401).